The sequence spans 205 residues: MRGVFVTGTDTDVGKTMVSAWLAQHWRADYWKPIQTGSTEGTDFESVARLAPAARIHPSAVVLPAPLSPHEAARREKTRIDLSSLVPPVTDRPLVVEGAGGIMVPINEVALMIDLMERLSLPAVVVARSGLGTINHTLMTLEMLRRRRVPLLGVVMNGQKNPANRQAIEHFGGVRVLAEIQPLPAVTAATIAGLPPPTFTCPGDP.

Thr16 provides a ligand contact to Mg(2+). Lys32 is an active-site residue. Thr36 serves as a coordination point for substrate. Mg(2+) is bound at residue Glu97. Position 97–100 (97–100 (EGAG)) interacts with ATP.

It belongs to the dethiobiotin synthetase family. In terms of assembly, homodimer. Requires Mg(2+) as cofactor.

The protein resides in the cytoplasm. It carries out the reaction (7R,8S)-7,8-diammoniononanoate + CO2 + ATP = (4R,5S)-dethiobiotin + ADP + phosphate + 3 H(+). It functions in the pathway cofactor biosynthesis; biotin biosynthesis; biotin from 7,8-diaminononanoate: step 1/2. Its function is as follows. Catalyzes a mechanistically unusual reaction, the ATP-dependent insertion of CO2 between the N7 and N8 nitrogen atoms of 7,8-diaminopelargonic acid (DAPA, also called 7,8-diammoniononanoate) to form a ureido ring. The chain is ATP-dependent dethiobiotin synthetase BioD from Paramagnetospirillum magneticum (strain ATCC 700264 / AMB-1) (Magnetospirillum magneticum).